A 477-amino-acid polypeptide reads, in one-letter code: Myc-associated zinc finger protein (477 aa).

Disordered regions lie at residues 59-78 and 121-144; these read AQSP…APAA and TVDT…SAPA. The span at 130-140 shows a compositional bias: pro residues; it reads PPAPPPPPPAV. C2H2-type zinc fingers lie at residues 190–212, 279–301, 307–329, and 337–360; these read YICA…EAIH, HACE…KLSH, YQCP…VRSH, and YNCS…RQVH. Position 361 is a phosphoserine (serine 361). Residues 366–388 form a C2H2-type 5 zinc finger; sequence FKCEKCEAAFATKDRLRAHTVRH. A C2H2-type 6; atypical zinc finger spans residues 392–413; the sequence is VPCHVCGKMLSSAYISDHMKVH.

Interacts with BPTF. In terms of tissue distribution, expressed in Purkinje cells in the brain (at protein level).

It localises to the nucleus. Functionally, transcriptional regulator. Acts as a transcriptional activator that binds to purine-rich GAGA sites found in the promoter of many genes including insulin I and II and islet amyloid polypeptide. The protein is Myc-associated zinc finger protein (Maz) of Mus musculus (Mouse).